The primary structure comprises 346 residues: Dihydroorotase (346 aa).

His-13 and His-15 together coordinate Zn(2+). Residues 15-17 and Asn-41 contribute to the substrate site; that span reads HLR. Lys-99, His-136, and His-174 together coordinate Zn(2+). Lys-99 is subject to N6-carboxylysine. His-136 is a binding site for substrate. Residue Leu-219 coordinates substrate. Zn(2+) is bound at residue Asp-247. Residue Asp-247 is part of the active site. Residues His-251 and Ala-263 each contribute to the substrate site.

Belongs to the metallo-dependent hydrolases superfamily. DHOase family. Class II DHOase subfamily. In terms of assembly, homodimer. The cofactor is Zn(2+).

It carries out the reaction (S)-dihydroorotate + H2O = N-carbamoyl-L-aspartate + H(+). The protein operates within pyrimidine metabolism; UMP biosynthesis via de novo pathway; (S)-dihydroorotate from bicarbonate: step 3/3. In terms of biological role, catalyzes the reversible cyclization of carbamoyl aspartate to dihydroorotate. This is Dihydroorotase from Rhizobium rhizogenes (strain K84 / ATCC BAA-868) (Agrobacterium radiobacter).